The chain runs to 127 residues: Modulator protein MzrA (127 aa).

The Cytoplasmic portion of the chain corresponds to 1–11 (MRKPRVTLRHL). The helical transmembrane segment at 12–31 (AWSTMLLMVLGTGMLFWSAV) threads the bilayer. The Periplasmic portion of the chain corresponds to 32 to 127 (RQQESTLAIR…RLRDAPHRMG (96 aa)).

The protein belongs to the MzrA family. In terms of assembly, interacts with EnvZ.

Its subcellular location is the cell inner membrane. Functionally, modulates the activity of the EnvZ/OmpR two-component regulatory system, probably by directly modulating EnvZ enzymatic activity and increasing stability of phosphorylated OmpR. The polypeptide is Modulator protein MzrA (Citrobacter rodentium (strain ICC168) (Citrobacter freundii biotype 4280)).